The chain runs to 330 residues: Aspartate--ammonia ligase (330 aa).

It belongs to the class-II aminoacyl-tRNA synthetase family. AsnA subfamily.

The protein resides in the cytoplasm. It catalyses the reaction L-aspartate + NH4(+) + ATP = L-asparagine + AMP + diphosphate + H(+). Its pathway is amino-acid biosynthesis; L-asparagine biosynthesis; L-asparagine from L-aspartate (ammonia route): step 1/1. The polypeptide is Aspartate--ammonia ligase (Haemophilus influenzae (strain 86-028NP)).